Consider the following 377-residue polypeptide: Chaperone protein DnaJ (377 aa).

The region spanning 5-70 (DYYELLGLQK…EKKAKYDQFG (66 aa)) is the J domain. The CR-type zinc-finger motif lies at 137–219 (GVEKEISVTR…CRGKGSVRKT (83 aa)). 8 residues coordinate Zn(2+): Cys150, Cys153, Cys167, Cys170, Cys193, Cys196, Cys207, and Cys210. CXXCXGXG motif repeat units lie at residues 150–157 (CEHCHGSG), 167–174 (CPTCSGSG), 193–200 (CDTCRGTG), and 207–214 (CSECRGKG).

It belongs to the DnaJ family. As to quaternary structure, homodimer. The cofactor is Zn(2+).

Its subcellular location is the cytoplasm. Its function is as follows. Participates actively in the response to hyperosmotic and heat shock by preventing the aggregation of stress-denatured proteins and by disaggregating proteins, also in an autonomous, DnaK-independent fashion. Unfolded proteins bind initially to DnaJ; upon interaction with the DnaJ-bound protein, DnaK hydrolyzes its bound ATP, resulting in the formation of a stable complex. GrpE releases ADP from DnaK; ATP binding to DnaK triggers the release of the substrate protein, thus completing the reaction cycle. Several rounds of ATP-dependent interactions between DnaJ, DnaK and GrpE are required for fully efficient folding. Also involved, together with DnaK and GrpE, in the DNA replication of plasmids through activation of initiation proteins. This chain is Chaperone protein DnaJ, found in Clostridium beijerinckii (strain ATCC 51743 / NCIMB 8052) (Clostridium acetobutylicum).